A 348-amino-acid polypeptide reads, in one-letter code: Rhodopsin (348 aa).

The residue at position 1 (methionine 1) is an N-acetylmethionine. The Extracellular segment spans residues 1–36 (MNGTEGPNFYVPFSNKTGVVRSPFEEPQYYLAEPWQ). N-linked (GlcNAc...) asparagine glycosylation is found at asparagine 2 and asparagine 15. The helical transmembrane segment at 37 to 61 (FSCLAAYMFMLIVLGFPINFLTLYV) threads the bilayer. The Cytoplasmic portion of the chain corresponds to 62 to 73 (TIQHKKLRTPLN). Residues 74-96 (YILLNLAIADLFMVFGGFTTTLY) form a helical membrane-spanning segment. Over 97-110 (TSLHGYFVFGPTGC) the chain is Extracellular. A disulfide bond links cysteine 110 and cysteine 187. Residues 111–133 (DLEGFFATLGGEIALWSLVVLAI) traverse the membrane as a helical segment. The short motif at 134-136 (ERY) is the 'Ionic lock' involved in activated form stabilization element. Over 134–152 (ERYIVVCKPMSNFRFGENH) the chain is Cytoplasmic. The helical transmembrane segment at 153–173 (AIMGVAFTWVMALACAAPPLV) threads the bilayer. Topologically, residues 174–202 (GWSRYIPEGMQCSCGIDYYTLKPEVNNES) are extracellular. Glutamate 201 contacts Zn(2+). Residues 203–224 (FVIYMFVVHFTIPMVVIFFCYG) form a helical membrane-spanning segment. The Cytoplasmic portion of the chain corresponds to 225-252 (QLVFTVKEAAAQQQESATTQKAEKEVTR). The chain crosses the membrane as a helical span at residues 253–274 (MVIIMVIAFLICWLPYAGVAFY). The Extracellular portion of the chain corresponds to 275–286 (IFTHQGSNFGPI). Residue glutamine 279 participates in Zn(2+) binding. The chain crosses the membrane as a helical span at residues 287–308 (LMTLPAFFAKTSAVYNPVIYIM). Lysine 296 carries the post-translational modification N6-(retinylidene)lysine. The Cytoplasmic portion of the chain corresponds to 309-348 (LNKQFRTCMLTTLCCGKIPLGDDEASATASKTETSQVAPA). S-palmitoyl cysteine attachment occurs at residues cysteine 322 and cysteine 323. The segment at 330-348 (DDEASATASKTETSQVAPA) is interaction with SAG. Position 334 is a phosphoserine (serine 334). Residue threonine 336 is modified to Phosphothreonine. Phosphoserine is present on serine 338. Phosphothreonine is present on residues threonine 340 and threonine 342. At serine 343 the chain carries Phosphoserine.

This sequence belongs to the G-protein coupled receptor 1 family. Opsin subfamily. In terms of assembly, homodimer. May form a complex composed of RHO, GRK1 and RCVRN in a Ca(2+)-dependent manner; RCVRN prevents the interaction between GRK1 and RHO. Interacts with GRK1. Interacts (phosphorylated form) with SAG. Interacts with GNAT1. Interacts with GNAT3. SAG and G-proteins compete for a common binding site. Interacts with PRCD; the interaction promotes PRCD stability. Forms a complex with ASAP1 and ARF4. Forms a complex with ASAP1, RAB11A, Rabin8/RAB3IP, ARF4 and RAB11FIP3; the complex regulates Golgi-to-cilia rhodopsin/RHO transport in photoreceptors. Post-translationally, phosphorylated on some or all of the serine and threonine residues present in the C-terminal region. Contains one covalently linked retinal chromophore. Upon light absorption, the covalently bound 11-cis-retinal is converted to all-trans-retinal. After hydrolysis of the Schiff base and release of the covalently bound all-trans-retinal, active rhodopsin is regenerated by binding of a fresh molecule of 11-cis-retinal.

It is found in the membrane. The protein localises to the cell projection. It localises to the cilium. The protein resides in the photoreceptor outer segment. Photoreceptor required for image-forming vision at low light intensity. Required for photoreceptor cell viability after birth. Light-induced isomerization of 11-cis to all-trans retinal triggers a conformational change that activates signaling via G-proteins. Subsequent receptor phosphorylation mediates displacement of the bound G-protein alpha subunit by the arrestin SAG and terminates signaling. The polypeptide is Rhodopsin (RHO) (Caluromys philander (Bare-tailed woolly opossum)).